We begin with the raw amino-acid sequence, 463 residues long: Argininosuccinate lyase (463 aa).

The protein belongs to the lyase 1 family. Argininosuccinate lyase subfamily.

It localises to the cytoplasm. The catalysed reaction is 2-(N(omega)-L-arginino)succinate = fumarate + L-arginine. Its pathway is amino-acid biosynthesis; L-arginine biosynthesis; L-arginine from L-ornithine and carbamoyl phosphate: step 3/3. The sequence is that of Argininosuccinate lyase from Bradyrhizobium sp. (strain BTAi1 / ATCC BAA-1182).